The sequence spans 128 residues: NADPH-dependent 7-cyano-7-deazaguanine reductase (128 aa).

Cysteine 39 acts as the Thioimide intermediate in catalysis. The active-site Proton donor is aspartate 46. Residues 61-63 and 80-81 contribute to the substrate site; these read IEL and HE.

It belongs to the GTP cyclohydrolase I family. QueF type 1 subfamily.

The protein resides in the cytoplasm. The catalysed reaction is 7-aminomethyl-7-carbaguanine + 2 NADP(+) = 7-cyano-7-deazaguanine + 2 NADPH + 3 H(+). It participates in tRNA modification; tRNA-queuosine biosynthesis. In terms of biological role, catalyzes the NADPH-dependent reduction of 7-cyano-7-deazaguanine (preQ0) to 7-aminomethyl-7-deazaguanine (preQ1). The sequence is that of NADPH-dependent 7-cyano-7-deazaguanine reductase from Magnetococcus marinus (strain ATCC BAA-1437 / JCM 17883 / MC-1).